The sequence spans 666 residues: DNA ligase (666 aa).

NAD(+) is bound by residues 34–38 (DAEYD), 83–84 (SL), and Glu114. The N6-AMP-lysine intermediate role is filled by Lys116. Positions 137, 171, 286, and 310 each coordinate NAD(+). Zn(2+) contacts are provided by Cys404, Cys407, Cys422, and Cys427. Positions 588–666 (NTESTISEKS…EEFFAILKGE (79 aa)) constitute a BRCT domain.

It belongs to the NAD-dependent DNA ligase family. LigA subfamily. Requires Mg(2+) as cofactor. Mn(2+) serves as cofactor.

The catalysed reaction is NAD(+) + (deoxyribonucleotide)n-3'-hydroxyl + 5'-phospho-(deoxyribonucleotide)m = (deoxyribonucleotide)n+m + AMP + beta-nicotinamide D-nucleotide.. Its function is as follows. DNA ligase that catalyzes the formation of phosphodiester linkages between 5'-phosphoryl and 3'-hydroxyl groups in double-stranded DNA using NAD as a coenzyme and as the energy source for the reaction. It is essential for DNA replication and repair of damaged DNA. The protein is DNA ligase of Mesoplasma florum (strain ATCC 33453 / NBRC 100688 / NCTC 11704 / L1) (Acholeplasma florum).